A 98-amino-acid chain; its full sequence is Protein S100-A13 (98 aa).

One can recognise an EF-hand domain in the interval 18–53; it reads TTFFTFAGREGRKGSLSVNEFKELVTQQLPHLLKDV. Ca(2+) contacts are provided by S32, E37, D64, N66, D68, E70, and E75. Position 32 is a phosphoserine (S32).

The protein belongs to the S-100 family. Homodimer. Part of a copper-dependent multiprotein complex containing S100A13, FGF1 and SYT1. Interacts with FGF1 and SYT1. Interacts with IL1A.

The protein resides in the cytoplasm. It is found in the secreted. Its function is as follows. Plays a role in the export of proteins that lack a signal peptide and are secreted by an alternative pathway. Binds two calcium ions per subunit. Binds one copper ion. Binding of one copper ion does not interfere with calcium binding. Required for the copper-dependent stress-induced export of IL1A and FGF1. The calcium-free protein binds to lipid vesicles containing phosphatidylserine, but not to vesicles containing phosphatidylcholine. This Bos taurus (Bovine) protein is Protein S100-A13 (S100A13).